The following is a 200-amino-acid chain: Pyridoxal 5'-phosphate synthase subunit PdxT (200 aa).

L-glutamine is bound at residue 52 to 54 (GES). C84 acts as the Nucleophile in catalysis. L-glutamine is bound by residues R116 and 145-146 (IR). Catalysis depends on charge relay system residues H181 and E183.

Belongs to the glutaminase PdxT/SNO family. In terms of assembly, in the presence of PdxS, forms a dodecamer of heterodimers. Only shows activity in the heterodimer.

The enzyme catalyses aldehydo-D-ribose 5-phosphate + D-glyceraldehyde 3-phosphate + L-glutamine = pyridoxal 5'-phosphate + L-glutamate + phosphate + 3 H2O + H(+). It carries out the reaction L-glutamine + H2O = L-glutamate + NH4(+). Its pathway is cofactor biosynthesis; pyridoxal 5'-phosphate biosynthesis. In terms of biological role, catalyzes the hydrolysis of glutamine to glutamate and ammonia as part of the biosynthesis of pyridoxal 5'-phosphate. The resulting ammonia molecule is channeled to the active site of PdxS. This Saccharolobus solfataricus (strain ATCC 35092 / DSM 1617 / JCM 11322 / P2) (Sulfolobus solfataricus) protein is Pyridoxal 5'-phosphate synthase subunit PdxT.